A 126-amino-acid chain; its full sequence is Probable prefoldin subunit 6 (126 aa).

It belongs to the prefoldin subunit beta family. Heterohexamer of two PFD-alpha type and four PFD-beta type subunits. As to expression, expressed in embryonic blastomeres and gonads.

It localises to the cytoplasm. Binds specifically to cytosolic chaperonin (c-CPN) and transfers target proteins to it. Binds to nascent polypeptide chain and promotes folding in an environment in which there are many competing pathways for nonnative proteins. Required for positioning of the mitotic spindle. The sequence is that of Probable prefoldin subunit 6 (pfd-6) from Caenorhabditis elegans.